The following is a 665-amino-acid chain: Protein LOW PHOTOSYNTHETIC EFFICIENCY 1, chloroplastic (665 aa).

Residues 1-68 constitute a chloroplast transit peptide; the sequence is MQALSILPLK…VSSNRKVLFL (68 aa). PPR repeat units follow at residues 145–179, 181–217, 218–252, 253–283, 309–344, 345–375, 380–414, 422–456, 457–491, 492–526, 527–561, 562–596, and 597–631; these read PLQV…KSES, GVIG…GIVP, NIVT…GFEP, NPIT…LREK, GRIC…GVRP, SREE…IRER, SLSV…GPEP, VVSH…GLKP, QRRH…GEKP, TVIS…GIEP, NLYA…GIEP, SVVT…NVEP, and NEIT…GLKL.

It belongs to the PPR family. P subfamily. Interacts with HCF173.

The protein resides in the plastid. It is found in the chloroplast thylakoid membrane. Its subcellular location is the chloroplast stroma. Functionally, required for light-regulated photosystem II (PSII) biogenesis and grana thylakoids formation by binding to the 5' UTR of PSII subunit mRNAs (e.g. psbJ, psbN and psbA) in a light-dependent manner through a redox-based mechanism, and facilitating the association of HCF173 with target mRNAs, which encodes PSII reaction center proteins (e.g. J, N and D1), thus regulating its expression by modulating ribosome loading. The polypeptide is Protein LOW PHOTOSYNTHETIC EFFICIENCY 1, chloroplastic (Arabidopsis thaliana (Mouse-ear cress)).